The primary structure comprises 200 residues: Methyl-coenzyme M reductase I operon protein C (200 aa).

In terms of assembly, MCR is composed of three subunits: alpha, beta, and gamma. The function of proteins C and D is not known.

This chain is Methyl-coenzyme M reductase I operon protein C (mcrC), found in Methanocaldococcus jannaschii (strain ATCC 43067 / DSM 2661 / JAL-1 / JCM 10045 / NBRC 100440) (Methanococcus jannaschii).